We begin with the raw amino-acid sequence, 197 residues long: A-type ATP synthase subunit E (197 aa).

This sequence belongs to the V-ATPase E subunit family. In terms of assembly, has multiple subunits with at least A(3), B(3), C, D, E, F, H, I and proteolipid K(x).

The protein localises to the cell membrane. Its function is as follows. Component of the A-type ATP synthase that produces ATP from ADP in the presence of a proton gradient across the membrane. The protein is A-type ATP synthase subunit E of Thermococcus gammatolerans (strain DSM 15229 / JCM 11827 / EJ3).